Here is a 345-residue protein sequence, read N- to C-terminus: Probable glucan endo-1,3-beta-glucosidase BG4 (345 aa).

A signal peptide spans 1-22 (MLYSPKKLFLFFLSCIVLYVNS). Residues Asn-23 and Asn-119 are each glycosylated (N-linked (GlcNAc...) asparagine). The active-site Proton donor is the Glu-128. The active-site Nucleophile is the Glu-267. Asn-277 and Asn-306 each carry an N-linked (GlcNAc...) asparagine glycan.

The protein belongs to the glycosyl hydrolase 17 family.

Its subcellular location is the secreted. It catalyses the reaction Hydrolysis of (1-&gt;3)-beta-D-glucosidic linkages in (1-&gt;3)-beta-D-glucans.. In terms of biological role, may play a role in plant defense against pathogens. This chain is Probable glucan endo-1,3-beta-glucosidase BG4, found in Arabidopsis thaliana (Mouse-ear cress).